The primary structure comprises 701 residues: Vacuolar protein sorting-associated protein 52 B (701 aa).

2 coiled-coil regions span residues 23–45 (FEED…EECE) and 511–533 (QLDI…LAKL).

Belongs to the VPS52 family. As to quaternary structure, component of the Golgi-associated retrograde protein (GARP) complex. As to expression, detected in pollen.

It is found in the golgi apparatus. It localises to the trans-Golgi network membrane. The protein localises to the endosome membrane. The protein resides in the golgi apparatus membrane. Its function is as follows. May be involved in retrograde transport of early and late endosomes to the late Golgi. In Arabidopsis thaliana (Mouse-ear cress), this protein is Vacuolar protein sorting-associated protein 52 B (P2).